We begin with the raw amino-acid sequence, 428 residues long: Adenylosuccinate synthetase (428 aa).

GTP is bound by residues 11–17 (GDEGKGK) and 39–41 (GHT). The Proton acceptor role is filled by Asp12. The Mg(2+) site is built by Asp12 and Gly39. IMP is bound by residues 12 to 15 (DEGK), 37 to 40 (NAGH), Thr130, Arg144, Asn226, Thr241, and Arg305. The active-site Proton donor is His40. 301–307 (VTTGRKR) contacts substrate. GTP is bound by residues Arg307, 333–335 (KLD), and 415–417 (GTG).

The protein belongs to the adenylosuccinate synthetase family. As to quaternary structure, homodimer. It depends on Mg(2+) as a cofactor.

The protein localises to the cytoplasm. It carries out the reaction IMP + L-aspartate + GTP = N(6)-(1,2-dicarboxyethyl)-AMP + GDP + phosphate + 2 H(+). Its pathway is purine metabolism; AMP biosynthesis via de novo pathway; AMP from IMP: step 1/2. Its function is as follows. Plays an important role in the de novo pathway and in the salvage pathway of purine nucleotide biosynthesis. Catalyzes the first committed step in the biosynthesis of AMP from IMP. This chain is Adenylosuccinate synthetase, found in Candida tropicalis (strain ATCC MYA-3404 / T1) (Yeast).